A 505-amino-acid chain; its full sequence is MAKKPTALIILDGFANRESEHGNAVKLANKPNFDRYYNKYPTTQIEASGLDVGLPEGQMGNSEVGHMNIGAGRIVYQSLTRINKSIEDGDFFENDVLNNAIAHVNSHDSALHIFGLLSDGGVHSHYKHLFALLELAKKQGVEKVYVHAFLDGRDVDQKSALKYIEETEAKFNELGIGQFASVSGRYYAMDRDKRWEREEKAYNAIRNFDAPTYATAKEGVEASYNEGLTDEFVVPFIVEDQNDGVNDGDAVIFYNFRPDRAAQLSEIFANRAFEGFKVEQVKDLFYATFTKYNDNIDAAIVFEKVDLNNTIGEIAQNNNLTQLRIAETEKYPHVTYFMSGGRNEEFKGERRRLIDSPKVATYDLKPEMSAYEVKDALLEELNKGDLDLIILNFANPDMVGHSGMLEPTIKAIEAVDECLGEVVDKILDMDGYAIITADHGNSDQVLTDDDQPMTTHTTNPVPVIVTKEGVTLRETGRLGDLAPTLLDLLNVEQPEDMTGESLIKH.

Asp-12 and Ser-62 together coordinate Mn(2+). The active-site Phosphoserine intermediate is the Ser-62. Residues His-123, 153-154, Arg-185, Arg-191, 257-260, and Lys-330 contribute to the substrate site; these read RD and RPDR. The Mn(2+) site is built by Asp-397, His-401, Asp-438, His-439, and His-456.

This sequence belongs to the BPG-independent phosphoglycerate mutase family. As to quaternary structure, monomer. Mn(2+) serves as cofactor.

It carries out the reaction (2R)-2-phosphoglycerate = (2R)-3-phosphoglycerate. It functions in the pathway carbohydrate degradation; glycolysis; pyruvate from D-glyceraldehyde 3-phosphate: step 3/5. Catalyzes the interconversion of 2-phosphoglycerate and 3-phosphoglycerate. The polypeptide is 2,3-bisphosphoglycerate-independent phosphoglycerate mutase (Staphylococcus aureus (strain MRSA252)).